The chain runs to 202 residues: FMN reductase (NADH) RutF 1 (202 aa).

The segment at 168-202 is disordered; that stretch reads PRTPRSGSAPAEPARAPRAVGARPAEGPALALRSA. A compositionally biased stretch (low complexity) spans 171–196; the sequence is PRSGSAPAEPARAPRAVGARPAEGPA.

It belongs to the non-flavoprotein flavin reductase family. RutF subfamily.

It carries out the reaction FMNH2 + NAD(+) = FMN + NADH + 2 H(+). Functionally, catalyzes the reduction of FMN to FMNH2 which is used to reduce pyrimidine by RutA via the Rut pathway. The chain is FMN reductase (NADH) RutF 1 from Methylorubrum extorquens (strain PA1) (Methylobacterium extorquens).